Reading from the N-terminus, the 132-residue chain is DNA-directed RNA polymerase subunit Rpo8 (132 aa).

It belongs to the archaeal Rpo8 RNA polymerase subunit family. Part of the 13-subunit RNA polymerase complex.

It localises to the cytoplasm. It carries out the reaction RNA(n) + a ribonucleoside 5'-triphosphate = RNA(n+1) + diphosphate. Its function is as follows. DNA-dependent RNA polymerase (RNAP) catalyzes the transcription of DNA into RNA using the four ribonucleoside triphosphates as substrates. The chain is DNA-directed RNA polymerase subunit Rpo8 from Saccharolobus solfataricus (strain ATCC 35092 / DSM 1617 / JCM 11322 / P2) (Sulfolobus solfataricus).